The following is a 459-amino-acid chain: Argininosuccinate lyase (459 aa).

The protein belongs to the lyase 1 family. Argininosuccinate lyase subfamily.

It localises to the cytoplasm. It catalyses the reaction 2-(N(omega)-L-arginino)succinate = fumarate + L-arginine. The protein operates within amino-acid biosynthesis; L-arginine biosynthesis; L-arginine from L-ornithine and carbamoyl phosphate: step 3/3. In Photorhabdus laumondii subsp. laumondii (strain DSM 15139 / CIP 105565 / TT01) (Photorhabdus luminescens subsp. laumondii), this protein is Argininosuccinate lyase.